A 420-amino-acid chain; its full sequence is Exodeoxyribonuclease 7 large subunit (420 aa).

The protein belongs to the XseA family. Heterooligomer composed of large and small subunits.

It is found in the cytoplasm. The catalysed reaction is Exonucleolytic cleavage in either 5'- to 3'- or 3'- to 5'-direction to yield nucleoside 5'-phosphates.. Its function is as follows. Bidirectionally degrades single-stranded DNA into large acid-insoluble oligonucleotides, which are then degraded further into small acid-soluble oligonucleotides. The chain is Exodeoxyribonuclease 7 large subunit from Helicobacter pylori (strain G27).